The chain runs to 278 residues: Nucleotide-binding protein Tmel_1373 (278 aa).

Residue G10 to S17 coordinates ATP. D58 to S61 lines the GTP pocket.

This sequence belongs to the RapZ-like family.

Its function is as follows. Displays ATPase and GTPase activities. This is Nucleotide-binding protein Tmel_1373 from Thermosipho melanesiensis (strain DSM 12029 / CIP 104789 / BI429).